The chain runs to 158 residues: MALFTTGRQFIQDLEKSGALGIYVPSEGGFEGRYQRRLRAAGYSTLHISAPGLGDLPSYLTQVHGVRPPHLGKSTQGNTDWGVKTFFLPPLVNYHLENLPPKARGLVLWMIDGKRLSRQELAYLSILPAQEPKVKIVIELGGDRQFRWQPLKEMAAAA.

The protein belongs to the complex I NdhN subunit family. NDH-1 can be composed of about 15 different subunits; different subcomplexes with different compositions have been identified which probably have different functions.

It localises to the cellular thylakoid membrane. It carries out the reaction a plastoquinone + NADH + (n+1) H(+)(in) = a plastoquinol + NAD(+) + n H(+)(out). The enzyme catalyses a plastoquinone + NADPH + (n+1) H(+)(in) = a plastoquinol + NADP(+) + n H(+)(out). Functionally, NDH-1 shuttles electrons from an unknown electron donor, via FMN and iron-sulfur (Fe-S) centers, to quinones in the respiratory and/or the photosynthetic chain. The immediate electron acceptor for the enzyme in this species is believed to be plastoquinone. Couples the redox reaction to proton translocation, and thus conserves the redox energy in a proton gradient. Cyanobacterial NDH-1 also plays a role in inorganic carbon-concentration. The polypeptide is NAD(P)H-quinone oxidoreductase subunit N (Cyanothece sp. (strain PCC 7425 / ATCC 29141)).